The sequence spans 154 residues: Myoglobin (154 aa).

Positions 2-148 (GLSDGEWQLV…FRNDMAAKYK (147 aa)) constitute a Globin domain. S4 bears the Phosphoserine mark. H65 is a nitrite binding site. Residue H65 coordinates O2. Position 68 is a phosphothreonine (T68). Residue H94 participates in heme b binding.

The protein belongs to the globin family. In terms of assembly, monomeric.

Its subcellular location is the cytoplasm. The protein resides in the sarcoplasm. It carries out the reaction Fe(III)-heme b-[protein] + nitric oxide + H2O = Fe(II)-heme b-[protein] + nitrite + 2 H(+). The enzyme catalyses H2O2 + AH2 = A + 2 H2O. Monomeric heme protein which primary function is to store oxygen and facilitate its diffusion within muscle tissues. Reversibly binds oxygen through a pentacoordinated heme iron and enables its timely and efficient release as needed during periods of heightened demand. Depending on the oxidative conditions of tissues and cells, and in addition to its ability to bind oxygen, it also has a nitrite reductase activity whereby it regulates the production of bioactive nitric oxide. Under stress conditions, like hypoxia and anoxia, it also protects cells against reactive oxygen species thanks to its pseudoperoxidase activity. This is Myoglobin (MB) from Saimiri sciureus (Common squirrel monkey).